Here is a 132-residue protein sequence, read N- to C-terminus: Fatty acid-binding protein, intestinal (132 aa).

Position 2 is an N-acetylalanine (Ala-2). Hexadecanoate contacts are provided by Trp-83 and Arg-107. Positions 83 and 107 each coordinate tetradecanoate.

This sequence belongs to the calycin superfamily. Fatty-acid binding protein (FABP) family. In terms of tissue distribution, expressed in the small intestine and at much lower levels in the large intestine. Highest expression levels in the jejunum.

The protein localises to the cytoplasm. Functionally, FABPs are thought to play a role in the intracellular transport of long-chain fatty acids and their acyl-CoA esters. FABP2 is probably involved in triglyceride-rich lipoprotein synthesis. Binds saturated long-chain fatty acids with a high affinity, but binds with a lower affinity to unsaturated long-chain fatty acids. FABP2 may also help maintain energy homeostasis by functioning as a lipid sensor. The sequence is that of Fatty acid-binding protein, intestinal (FABP2) from Homo sapiens (Human).